The sequence spans 92 residues: YcgL domain-containing protein SO_2575 (92 aa).

In terms of domain architecture, YcgL spans 1-85 (MLCAVYKSSR…PQVNLLAEHR (85 aa)).

The chain is YcgL domain-containing protein SO_2575 from Shewanella oneidensis (strain ATCC 700550 / JCM 31522 / CIP 106686 / LMG 19005 / NCIMB 14063 / MR-1).